The chain runs to 126 residues: Phosphoribosyl-ATP pyrophosphatase (126 aa).

This sequence belongs to the PRA-PH family.

Its subcellular location is the cytoplasm. The enzyme catalyses 1-(5-phospho-beta-D-ribosyl)-ATP + H2O = 1-(5-phospho-beta-D-ribosyl)-5'-AMP + diphosphate + H(+). The protein operates within amino-acid biosynthesis; L-histidine biosynthesis; L-histidine from 5-phospho-alpha-D-ribose 1-diphosphate: step 2/9. This is Phosphoribosyl-ATP pyrophosphatase from Variovorax paradoxus (strain S110).